Here is a 98-residue protein sequence, read N- to C-terminus: MAHKKGTGSTRNGRDSNAQRLGVKRYGGQVVRAGNILVRQRGTKFHPGNNVGIGSDDTLFALIDGVVMFERKGKTRKKVSVYLPLTAVETAPAEAVAS.

The disordered stretch occupies residues 1–22; that stretch reads MAHKKGTGSTRNGRDSNAQRLG. The segment covering 7 to 19 has biased composition (polar residues); that stretch reads TGSTRNGRDSNAQ.

The protein belongs to the bacterial ribosomal protein bL27 family.

The protein is Large ribosomal subunit protein bL27 of Nostoc punctiforme (strain ATCC 29133 / PCC 73102).